The sequence spans 334 residues: Fructose-1,6-bisphosphatase class 1 2 (334 aa).

4 residues coordinate Mg(2+): E92, D114, L116, and D117. Residues 117–120, N208, and K274 contribute to the substrate site; that span reads DGSS. E280 lines the Mg(2+) pocket.

It belongs to the FBPase class 1 family. In terms of assembly, homotetramer. The cofactor is Mg(2+).

It localises to the cytoplasm. The enzyme catalyses beta-D-fructose 1,6-bisphosphate + H2O = beta-D-fructose 6-phosphate + phosphate. Its pathway is carbohydrate biosynthesis; gluconeogenesis. In Albidiferax ferrireducens (strain ATCC BAA-621 / DSM 15236 / T118) (Rhodoferax ferrireducens), this protein is Fructose-1,6-bisphosphatase class 1 2.